A 160-amino-acid chain; its full sequence is SsrA-binding protein (160 aa).

Positions 132-160 are disordered; it reads KIHDKRDDMQKKDAQQEIARALKSSNRYE. The span at 135–146 shows a compositional bias: basic and acidic residues; the sequence is DKRDDMQKKDAQ.

Belongs to the SmpB family.

It localises to the cytoplasm. Its function is as follows. Required for rescue of stalled ribosomes mediated by trans-translation. Binds to transfer-messenger RNA (tmRNA), required for stable association of tmRNA with ribosomes. tmRNA and SmpB together mimic tRNA shape, replacing the anticodon stem-loop with SmpB. tmRNA is encoded by the ssrA gene; the 2 termini fold to resemble tRNA(Ala) and it encodes a 'tag peptide', a short internal open reading frame. During trans-translation Ala-aminoacylated tmRNA acts like a tRNA, entering the A-site of stalled ribosomes, displacing the stalled mRNA. The ribosome then switches to translate the ORF on the tmRNA; the nascent peptide is terminated with the 'tag peptide' encoded by the tmRNA and targeted for degradation. The ribosome is freed to recommence translation, which seems to be the essential function of trans-translation. In Leptospira borgpetersenii serovar Hardjo-bovis (strain JB197), this protein is SsrA-binding protein.